The sequence spans 99 residues: Complement inhibitor RaCI7 (99 aa).

Positions 1–24 (MAALNGLVLLLLTISAMFISECYS) are cleaved as a signal peptide. 3 disulfides stabilise this stretch: C37–C61, C42–C63, and C57–C78.

This sequence belongs to the RaCI family. In terms of tissue distribution, expressed in salivary glands.

It is found in the secreted. In terms of biological role, complement inhibitor. Prevents complement-mediated C5 activation by binding to C5. Binds C5 at a different binding site than the other tick complement inhibitors OmCI and CirpT1, and the drug eculizumab. This chain is Complement inhibitor RaCI7, found in Dermacentor andersoni (Rocky mountain wood tick).